The primary structure comprises 447 residues: tRNA(Ile)-lysidine synthase (447 aa).

31–36 (SGGMDS) is a binding site for ATP.

The protein belongs to the tRNA(Ile)-lysidine synthase family.

Its subcellular location is the cytoplasm. It catalyses the reaction cytidine(34) in tRNA(Ile2) + L-lysine + ATP = lysidine(34) in tRNA(Ile2) + AMP + diphosphate + H(+). In terms of biological role, ligates lysine onto the cytidine present at position 34 of the AUA codon-specific tRNA(Ile) that contains the anticodon CAU, in an ATP-dependent manner. Cytidine is converted to lysidine, thus changing the amino acid specificity of the tRNA from methionine to isoleucine. The protein is tRNA(Ile)-lysidine synthase of Pseudothermotoga lettingae (strain ATCC BAA-301 / DSM 14385 / NBRC 107922 / TMO) (Thermotoga lettingae).